Consider the following 411-residue polypeptide: MNYGEKSPALWDAIKSEEKRQEDTIELIASENIVSDAVREAQGSVLTNKYAEGYPGKRYYGGCQYIDKVEQLAIDYAKKLFNAEYANVQPHSGSQANMTVYNALLKPGDTILGMGMDAGGHLTHGSKVNFSGKIFNSISYDLNPETEELDFDRIRQLAIEKKPKLIIAGASAYSRIIDWQKFREIADEVGAYLMVDMAHIAGLVATGAHPSPVPIADVVTTTTHKTLRGPRGGMILSNNKELGKKIDSALFPGTQGGPLEHVIAAKAQAFYEDLQPEFTQYIDQVIKNSKAMAEEFKNSKNIRVVSGGTDNHLMIIDITKTGVTGKDAQNLLDSVNITTNKESIPGDKRSPFITSGLRIGTPAITSRGFKEPDAKEVAKIIIEVLDKPEDAGVLAEAKERVNDLVQKYPIK.

120 to 122 (GHL) contributes to the (6S)-5,6,7,8-tetrahydrofolate binding site. Lys225 is subject to N6-(pyridoxal phosphate)lysine. 350 to 352 (SPF) serves as a coordination point for (6S)-5,6,7,8-tetrahydrofolate.

This sequence belongs to the SHMT family. As to quaternary structure, homodimer. Pyridoxal 5'-phosphate serves as cofactor.

Its subcellular location is the cytoplasm. The catalysed reaction is (6R)-5,10-methylene-5,6,7,8-tetrahydrofolate + glycine + H2O = (6S)-5,6,7,8-tetrahydrofolate + L-serine. It participates in one-carbon metabolism; tetrahydrofolate interconversion. It functions in the pathway amino-acid biosynthesis; glycine biosynthesis; glycine from L-serine: step 1/1. Its function is as follows. Catalyzes the reversible interconversion of serine and glycine with tetrahydrofolate (THF) serving as the one-carbon carrier. This reaction serves as the major source of one-carbon groups required for the biosynthesis of purines, thymidylate, methionine, and other important biomolecules. Also exhibits THF-independent aldolase activity toward beta-hydroxyamino acids, producing glycine and aldehydes, via a retro-aldol mechanism. The sequence is that of Serine hydroxymethyltransferase from Lactobacillus johnsonii (strain CNCM I-12250 / La1 / NCC 533).